Here is a 473-residue protein sequence, read N- to C-terminus: Biotin-dependent acetyl-/propionyl-coenzyme A carboxylase beta6 subunit (473 aa).

One can recognise a CoA carboxyltransferase N-terminal domain in the interval 1 to 224; the sequence is MTIMAPEAVG…QGHFDRSKAE (224 aa). The 249-residue stretch at 225 to 473 folds into the CoA carboxyltransferase C-terminal domain; sequence AGDTDIHALL…RRGRHKNIPL (249 aa).

This sequence belongs to the AccD/PCCB family. As to quaternary structure, the biotin-dependent acyl-CoA carboxylase complex is composed of AccA3, which contains the biotin carboxylase (BC) and biotin carboxyl carrier protein (BCCP) domains, and AccD6, which contains the carboxyl transferase (CT) domain.

It carries out the reaction N(6)-carboxybiotinyl-L-lysyl-[protein] + acetyl-CoA = N(6)-biotinyl-L-lysyl-[protein] + malonyl-CoA. The catalysed reaction is N(6)-carboxybiotinyl-L-lysyl-[protein] + propanoyl-CoA = methylmalonyl-CoA + N(6)-biotinyl-L-lysyl-[protein]. It functions in the pathway lipid metabolism; fatty acid biosynthesis. Its pathway is lipid metabolism; mycolic acid biosynthesis. Functionally, component of a biotin-dependent acyl-CoA carboxylase complex. This subunit transfers the CO2 from carboxybiotin to the CoA ester substrate. When associated with the alpha3 subunit AccA3, is involved in the carboxylation of acetyl-CoA and propionyl-CoA. The chain is Biotin-dependent acetyl-/propionyl-coenzyme A carboxylase beta6 subunit (accD6) from Mycobacterium bovis (strain ATCC BAA-935 / AF2122/97).